The primary structure comprises 305 residues: Phosphatidate cytidylyltransferase (305 aa).

7 consecutive transmembrane segments (helical) span residues 24–44, 97–117, 124–144, 151–171, 202–222, 232–252, and 277–297; these read LLVF…AFIV, PEHV…HLVF, LGPI…SVPI, LYGF…IFLI, TVVG…IFYS, IAMP…GFFG, and MLDV…ILLI.

It belongs to the CDS family.

The protein localises to the cell membrane. The catalysed reaction is a 1,2-diacyl-sn-glycero-3-phosphate + CTP + H(+) = a CDP-1,2-diacyl-sn-glycerol + diphosphate. It participates in phospholipid metabolism; CDP-diacylglycerol biosynthesis; CDP-diacylglycerol from sn-glycerol 3-phosphate: step 3/3. The chain is Phosphatidate cytidylyltransferase (cdsA) from Chlamydia muridarum (strain MoPn / Nigg).